Reading from the N-terminus, the 319-residue chain is Probable cytochrome c oxidase subunit 2 (319 aa).

An N-terminal signal peptide occupies residues Met1–Gly33. 2 helical membrane-spanning segments follow: residues Trp63–Phe83 and Leu101–Phe121. Cu cation contacts are provided by His227, Cys262, Cys266, and His270.

The protein belongs to the cytochrome c oxidase subunit 2 family. Requires Cu cation as cofactor. Heme serves as cofactor.

Its subcellular location is the cell membrane. It carries out the reaction 4 Fe(II)-[cytochrome c] + O2 + 8 H(+)(in) = 4 Fe(III)-[cytochrome c] + 2 H2O + 4 H(+)(out). Its function is as follows. Subunits I and II form the functional core of the enzyme complex. Electrons originating in cytochrome c are transferred via heme a and Cu(A) to the binuclear center formed by heme a3 and Cu(B). The protein is Probable cytochrome c oxidase subunit 2 (ctaC) of Streptomyces coelicolor (strain ATCC BAA-471 / A3(2) / M145).